Reading from the N-terminus, the 399-residue chain is Yellow-related salivary protein LJM11 (399 aa).

An N-terminal signal peptide occupies residues M1–G18. The cysteines at positions 115 and 186 are disulfide-linked. Residue N213 is glycosylated (N-linked (GlcNAc...) asparagine). C319 and C395 are joined by a disulfide. Positions 345, 360, and 362 each coordinate serotonin.

This sequence belongs to the major royal jelly protein family. As to expression, salivary gland (at protein level).

Its subcellular location is the secreted. Functionally, probably modulates blood feeding of sand flies on vertebrate species by binding and sequestering different mediators involved in the host response. Binds biogenic amines. Binds serotonin with high affinity. Binds adrenaline and noradrenaline. Binds dopamine and octopamine. Poorly binds histamine. Induces a delayed type hypersensitivity response in host tissues. Induces systemic Th1 immune response in the host. Immunogenic; elicits antibody production in the host. Functions as a chemoattractant for host neutrophils; likely acts through a G-protein-coupled receptor and effect is dependent on calcium influx. (Microbial infection) Modulates infection caused by Leishmania species in the host. The chain is Yellow-related salivary protein LJM11 from Lutzomyia longipalpis (Sand fly).